The chain runs to 420 residues: Phospholipase A1-II 3 (420 aa).

The first 21 residues, 1-21 (MCCFLLVSVLLATTLTDVASA), serve as a signal peptide directing secretion. Asn231 carries N-linked (GlcNAc...) asparagine glycosylation. Ser240 serves as the catalytic Acyl-ester intermediate. Residue Ser240 is the Charge relay system of the active site. An N-linked (GlcNAc...) asparagine glycan is attached at Asn294. Catalysis depends on charge relay system residues Asp305 and His343. A coiled-coil region spans residues 367–388 (VVDRDLALVNKEVDALRDEYQV). Residue Asn403 is glycosylated (N-linked (GlcNAc...) asparagine).

This sequence belongs to the AB hydrolase superfamily. Lipase family.

It localises to the secreted. Functionally, acylhydrolase that catalyzes the hydrolysis of phospholipids at the sn-1 position. This chain is Phospholipase A1-II 3, found in Oryza sativa subsp. japonica (Rice).